The chain runs to 465 residues: Poly(A) polymerase I (465 aa).

Residues aspartate 80, aspartate 82, and aspartate 162 contribute to the active site. Positions 430–465 (APPEQKGMLNELDDDPAPRRRRSRPRKRAPRREGTV) are disordered. A compositionally biased stretch (basic residues) spans 448–459 (RRRRSRPRKRAP).

The protein belongs to the tRNA nucleotidyltransferase/poly(A) polymerase family.

It carries out the reaction RNA(n) + ATP = RNA(n)-3'-adenine ribonucleotide + diphosphate. In terms of biological role, adds poly(A) tail to the 3' end of many RNAs, which usually targets these RNAs for decay. Plays a significant role in the global control of gene expression, through influencing the rate of transcript degradation, and in the general RNA quality control. This is Poly(A) polymerase I from Salmonella typhi.